Here is a 448-residue protein sequence, read N- to C-terminus: tRNA-2-methylthio-N(6)-dimethylallyladenosine synthase (448 aa).

The MTTase N-terminal domain maps to 3–120 (KKLFIKTHGC…LPTMLDSRQG (118 aa)). The [4Fe-4S] cluster site is built by Cys12, Cys49, Cys83, Cys158, Cys162, and Cys165. Residues 144-376 (TSDGATAFVS…QERLNQQTMQ (233 aa)) enclose the Radical SAM core domain. One can recognise a TRAM domain in the interval 379–444 (RRMVGNTERI…PNSLRGDLAS (66 aa)).

This sequence belongs to the methylthiotransferase family. MiaB subfamily. In terms of assembly, monomer. [4Fe-4S] cluster serves as cofactor.

The protein resides in the cytoplasm. It catalyses the reaction N(6)-dimethylallyladenosine(37) in tRNA + (sulfur carrier)-SH + AH2 + 2 S-adenosyl-L-methionine = 2-methylsulfanyl-N(6)-dimethylallyladenosine(37) in tRNA + (sulfur carrier)-H + 5'-deoxyadenosine + L-methionine + A + S-adenosyl-L-homocysteine + 2 H(+). Its function is as follows. Catalyzes the methylthiolation of N6-(dimethylallyl)adenosine (i(6)A), leading to the formation of 2-methylthio-N6-(dimethylallyl)adenosine (ms(2)i(6)A) at position 37 in tRNAs that read codons beginning with uridine. This Chromohalobacter salexigens (strain ATCC BAA-138 / DSM 3043 / CIP 106854 / NCIMB 13768 / 1H11) protein is tRNA-2-methylthio-N(6)-dimethylallyladenosine synthase.